The sequence spans 854 residues: Gamma-secretase-activating protein (854 aa).

This sequence belongs to the GSAP family. In terms of assembly, interacts with APP; specifically interacts with the CTF-alpha product of APP. Interacts with the gamma-secretase complex. The protein is first synthesized as a holoprotein form of 98 kDa and rapidly processed into the gamma-secretase-activating protein 16 kDa C-terminal form, which constitutes the predominant form. Widely expressed.

It localises to the golgi apparatus. It is found in the trans-Golgi network. Functionally, regulator of gamma-secretase activity, which specifically activates the production of amyloid-beta protein (amyloid-beta protein 40 and amyloid-beta protein 42), without affecting the cleavage of other gamma-secretase targets such has Notch. The gamma-secretase complex is an endoprotease complex that catalyzes the intramembrane cleavage of integral membrane proteins such as Notch receptors and APP (amyloid-beta precursor protein). Specifically promotes the gamma-cleavage of APP CTF-alpha (also named APP-CTF) by the gamma-secretase complex to generate amyloid-beta, while it reduces the epsilon-cleavage of APP CTF-alpha, leading to a low production of AICD. The polypeptide is Gamma-secretase-activating protein (GSAP) (Homo sapiens (Human)).